The sequence spans 243 residues: Phosphate-specific transport system accessory protein PhoU (243 aa).

Belongs to the PhoU family. In terms of assembly, homodimer.

Its subcellular location is the cytoplasm. Functionally, part of the phosphate (Pho) regulon, which plays a key role in phosphate homeostasis. Encoded together with proteins of the phosphate-specific transport (Pst) system in the polycistronic pstSCAB-phoU operon. PhoU is essential for the repression of the Pho regulon at high phosphate conditions. In this role, it may bind, possibly as a chaperone, to PhoR, PhoB or a PhoR-PhoB complex to promote dephosphorylation of phospho-PhoB, or inhibit formation of the PhoR-PhoB transitory complex. This Serratia marcescens protein is Phosphate-specific transport system accessory protein PhoU.